The following is a 168-amino-acid chain: Large ribosomal subunit protein uL10 (168 aa).

The protein belongs to the universal ribosomal protein uL10 family. In terms of assembly, part of the ribosomal stalk of the 50S ribosomal subunit. The N-terminus interacts with L11 and the large rRNA to form the base of the stalk. The C-terminus forms an elongated spine to which L12 dimers bind in a sequential fashion forming a multimeric L10(L12)X complex.

Its function is as follows. Forms part of the ribosomal stalk, playing a central role in the interaction of the ribosome with GTP-bound translation factors. In Acinetobacter baumannii (strain AB307-0294), this protein is Large ribosomal subunit protein uL10.